Reading from the N-terminus, the 114-residue chain is MGTRLFFYVALCLLWAGHRDAGITQSPRYKITETGRQVTLMCHQTWSHSYMFWYRQDLGHGLRLIYYSAAADITDKGEVPDGYVVSRSKTENFPLTLESATRSQTSVYFCASSE.

An N-terminal signal peptide occupies residues Met-1–Ala-21. The 93-residue stretch at Gly-22 to Glu-114 folds into the Ig-like domain. Residues Cys-42 and Cys-110 are joined by a disulfide bond.

In terms of assembly, alpha-beta TR is a heterodimer composed of an alpha and beta chain; disulfide-linked. The alpha-beta TR is associated with the transmembrane signaling CD3 coreceptor proteins to form the TR-CD3 (TcR or TCR). The assembly of alpha-beta TR heterodimers with CD3 occurs in the endoplasmic reticulum where a single alpha-beta TR heterodimer associates with one CD3D-CD3E heterodimer, one CD3G-CD3E heterodimer and one CD247 homodimer forming a stable octameric structure. CD3D-CD3E and CD3G-CD3E heterodimers preferentially associate with TR alpha and TR beta chains, respectively. The association of the CD247 homodimer is the last step of TcR assembly in the endoplasmic reticulum and is required for transport to the cell surface.

Its subcellular location is the cell membrane. Functionally, v region of the variable domain of T cell receptor (TR) beta chain that participates in the antigen recognition. Alpha-beta T cell receptors are antigen specific receptors which are essential to the immune response and are present on the cell surface of T lymphocytes. Recognize peptide-major histocompatibility (MH) (pMH) complexes that are displayed by antigen presenting cells (APC), a prerequisite for efficient T cell adaptive immunity against pathogens. Binding of alpha-beta TR to pMH complex initiates TR-CD3 clustering on the cell surface and intracellular activation of LCK that phosphorylates the ITAM motifs of CD3G, CD3D, CD3E and CD247 enabling the recruitment of ZAP70. In turn ZAP70 phosphorylates LAT, which recruits numerous signaling molecules to form the LAT signalosome. The LAT signalosome propagates signal branching to three major signaling pathways, the calcium, the mitogen-activated protein kinase (MAPK) kinase and the nuclear factor NF-kappa-B (NF-kB) pathways, leading to the mobilization of transcription factors that are critical for gene expression and essential for T cell growth and differentiation. The T cell repertoire is generated in the thymus, by V-(D)-J rearrangement. This repertoire is then shaped by intrathymic selection events to generate a peripheral T cell pool of self-MH restricted, non-autoaggressive T cells. Post-thymic interaction of alpha-beta TR with the pMH complexes shapes TR structural and functional avidity. This Homo sapiens (Human) protein is T cell receptor beta variable 10-2.